The sequence spans 687 residues: Chloride channel protein ClC-Kb (687 aa).

Over 1 to 50 the chain is Cytoplasmic; the sequence is MEEIVGLREGSPRKPVPLQELWRPCPRIRRNIQGSLEWLKERLFRVGEDW. Helical transmembrane passes span 51–82 and 91–111; these read YFLVALGVLMALISYAMNFAIGRVVRAHKWLY and LRYLSWTVYPVALLSFSSGFS. The segment at residues 116–127 is an intramembrane region (helical); sequence PSSGGSGIPEVK. S121 serves as a coordination point for chloride. A run of 2 helical transmembrane segments spans residues 141–160 and 161–180; these read IKNFGAKVVGLSCTLATGST and IFLGKLGPFVHLSVMIAAYL. N-linked (GlcNAc...) asparagine glycosylation is present at N193. An intramembrane region (helical) is located at residues 203–224; the sequence is AGAAVGVATVFAAPISGVLFSI. The chain crosses the membrane as a helical span at residues 236 to 255; that stretch reads YWRGFFAATCGAFMFHLLAV. Ca(2+) contacts are provided by E259, E261, D278, and E281. 2 helical membrane-spanning segments follow: residues 282 to 310 and 325 to 342; these read IFFFVALGAICGILSCGYNYCQRTSLFFL and PLYSALAAVVLASITYPP. The helical intramembrane region spans 349 to 360; sequence ASRLSMSEYLET. 2 consecutive transmembrane segments (helical) span residues 400 to 420 and 421 to 440; these read GTLVFFLVMKFWMLILATTIP and IPAGYFLPIFVYGAAIGRLF. F426 serves as a coordination point for chloride. An intramembrane region (helical) is located at residues 464 to 496; the sequence is GAYALAGAAAFSGAVTHTLSTALLAFEVSGQIV. The helical transmembrane segment at 500–520 threads the bilayer; that stretch reads PVLMAVLAANAICQSYQPSFY. At 521–687 the chain is on the cytoplasmic side; the sequence is DGTIIVKKLP…STLTNPPAPK (167 aa). 2 CBS domains span residues 551–609 and 626–687; these read MNCT…DSAS and CPTQ…PAPK.

The protein belongs to the chloride channel (TC 2.A.49) family. CLCNKB subfamily. Homodimer. Interacts with BSND. Post-translationally, N-glycosylated. In terms of tissue distribution, expressed predominantly in the kidney. Expressed in all segments of the nephron examined, including the S2 segment and the glomerulus.

The protein localises to the basolateral cell membrane. It catalyses the reaction chloride(in) = chloride(out). It carries out the reaction iodide(out) = iodide(in). The enzyme catalyses nitrate(in) = nitrate(out). The catalysed reaction is bromide(in) = bromide(out). In terms of biological role, anion-selective channel permeable to small monovalent anions with ion selectivity for chloride &gt; bromide &gt; nitrate &gt; iodide. Forms a homodimeric channel where each subunit has its own ion conduction pathway. May conduct double-barreled currents controlled by two types of gates, two fast gates that control each subunit independently and a slow common gate that opens and shuts off both subunits simultaneously. Assembles with the regulatory subunit BSND/Barttin for sorting at the basolateral plasma membrane domain and functional switch to the ion conducting state. CLCNKB:BSND channels display mostly a linear current-voltage relationship controlled by common gate. Mediates chloride conductance along nephron segments, namely the thick ascending limb of Henle's loop, convoluted tubule and the collecting duct, contributing to the maintenance of systemic acid-base and electrolyte homeostasis. Conducts chloride currents in the stria vascularis of the inner ear to establish the endocochlear potential necessary for normal hearing. This chain is Chloride channel protein ClC-Kb, found in Rattus norvegicus (Rat).